The sequence spans 5430 residues: Microtubule-actin cross-linking factor 1 (5430 aa).

Residues 1–47 (MSSSDEETLSERSCRSERSCRSERSYRSERSGSLSPCPPGDTLPWNL) are disordered. The actin-binding stretch occupies residues 1–295 (MSSSDEETLS…VITYVSSIYD (295 aa)). Ser-4 bears the Phosphoserine mark. A compositionally biased stretch (basic and acidic residues) spans 9–30 (LSERSCRSERSCRSERSYRSER). Phosphoserine is present on residues Ser-35 and Ser-57. Calponin-homology (CH) domains follow at residues 78 to 181 (RVQK…LHFQ) and 194 to 298 (MSAK…DAFP). LRR repeat units lie at residues 148-171 (QRQV…LTLG) and 240-264 (LVDM…VAER). Phosphoserine is present on Ser-280. LRR repeat units follow at residues 377 to 399 (LYKL…YHPN) and 441 to 464 (LNCE…LESG). Residues 868-925 (KSTLSVKAICDYRQIEITICKNDECVLEDNSQRTKWKVISPTGNEAMVPSVCLLIPPP) form the SH3 domain. The LRR 5 repeat unit spans residues 1050-1073 (ISELKNIRLRLEECEQRLLKQIQS). Ser-1122 carries the post-translational modification Phosphoserine. 3 LRR repeats span residues 1128–1154 (ATTL…VCLN), 1187–1210 (PADL…VKDK), and 1257–1282 (HRVI…DYRA). 2 positions are modified to phosphoserine: Ser-1367 and Ser-1376. LRR repeat units follow at residues 1579–1602 (QQEL…IQNH) and 1629–1653 (LTAL…TREA). Spectrin repeat units follow at residues 1816-1891 (ELQK…NFEE) and 1933-2041 (QYQQ…ALLQ). Ser-1860 carries the phosphoserine modification. An LRR 11 repeat occupies 1869 to 1891 (KGDLRFVTISGQKVLETENNFEE). LRR repeat units follow at residues 2058–2083 (LQSM…LIQE) and 2194–2220 (IQEL…ALGS). A Spectrin 3 repeat occupies 2399-2507 (RMEEVQKEAS…TVARQKQLEE (109 aa)). A phosphoserine mark is found at Ser-2429 and Ser-2454. LRR repeat units follow at residues 2444-2467 (KAFL…LAGL), 2534-2557 (GVLG…QFML), and 2702-2725 (KKRL…RMNR). Spectrin repeat units follow at residues 2733–2837 (TQQF…SRLK) and 2842–2945 (KAQK…SLEE). Phosphoserine is present on residues Ser-2769 and Ser-2895. LRR repeat units lie at residues 2984–3009 (NKNL…YLRD), 3105–3127 (NKIQ…MLEE), and 3214–3237 (KEQV…LIQS). Spectrin repeat units lie at residues 3169 to 3274 (EDFY…QLQE), 3281 to 3383 (KFQD…QLED), 3388 to 3491 (AKQF…SLLE), 3714 to 3818 (RSQQ…ARLE), 3825 to 3927 (NQFW…ALDE), 4047 to 4152 (LAEK…KLED), 4157 to 4261 (AVQY…HKLE), 4267 to 4370 (LGQF…QQLQ), 4375 to 4481 (QAQG…KLEE), 4486 to 4589 (ATEF…RSLD), 4594 to 4700 (RAKQ…KLEE), 4707 to 4808 (QFMD…RLEQ), and 4812 to 4916 (QAEE…QRLE). Residue Thr-3368 is modified to Phosphothreonine. LRR repeat units follow at residues 3737 to 3761 (MALG…AFSI) and 3846 to 3870 (AQLP…QLRE). Phosphoserine is present on Ser-4074. Lys-4252 carries the post-translational modification N6-acetyllysine. Residues 4538–4561 (RDQIIELDQTGNQLKFLSQKQDVV) form an LRR 22 repeat. The interval 4993 to 5023 (PTHAPFIEKSRSGSRKSLNQPTPPPMPILSQ) is disordered. Position 5009 is a phosphoserine (Ser-5009). 2 EF-hand domains span residues 5083–5118 (HKKS…SKFP) and 5119–5154 (TTKL…NKDA). 10 residues coordinate Ca(2+): Asp-5096, Asp-5098, Asp-5100, Lys-5102, Glu-5107, Asp-5132, Asp-5134, Asp-5136, Tyr-5138, and Glu-5143. Positions 5159-5231 (TDADKIEDEV…EFLVKNDPCR (73 aa)) constitute a GAR domain. Residues 5159–5430 (TDADKIEDEV…ASPRTPCPKR (272 aa)) are C-terminal tail. Positions 5247-5430 (PEGASQGMTP…ASPRTPCPKR (184 aa)) are disordered. A compositionally biased stretch (low complexity) spans 5267-5301 (SSRAASPTRSSSSASQSNHSCTSMPSSPATPASGT). A Phosphothreonine modification is found at Thr-5296. A compositionally biased stretch (polar residues) spans 5317 to 5341 (TFHSSRTSLAGDTSNSSSPASTGAK). Phosphoserine occurs at positions 5321 and 5334. The segment covering 5352 to 5366 (SRPGSRAGSRAGSRA) has biased composition (low complexity). The segment at 5355–5370 (GSRAGSRAGSRASSRR) is 4 X 4 AA tandem repeats of [GS]-S-R-[AR]. Residues Ser-5372 and Ser-5375 each carry the phosphoserine modification. A compositionally biased stretch (polar residues) spans 5381-5391 (ETQSACSDTSE). The span at 5392–5403 (SSAAGGQGSSRR) shows a compositional bias: low complexity.

This sequence belongs to the plakin or cytolinker family. As to quaternary structure, interacts with MAPRE1, CLASP1, CLASP2 and GOLGA4. Interacts with AXIN1 and LRP6. Found in a complex composed of MACF1, APC; AXIN1, CTNNB1 and GSK3B. Interacts with CAMSAP3. Post-translationally, phosphorylated on serine residues in the C-terminal tail by GSK3B. Phosphorylation inhibits microtubule-binding and this plays a critical role in bulge stem cell migration and skin wound repair. Wnt-signaling can repress phosphorylation.

The protein localises to the cytoplasm. The protein resides in the cytoskeleton. It localises to the golgi apparatus. Its subcellular location is the cell membrane. It is found in the cell projection. The protein localises to the ruffle membrane. The protein resides in the membrane. F-actin-binding protein which plays a role in cross-linking actin to other cytoskeletal proteins and also binds to microtubules. Plays an important role in ERBB2-dependent stabilization of microtubules at the cell cortex. Acts as a positive regulator of Wnt receptor signaling pathway and is involved in the translocation of AXIN1 and its associated complex (composed of APC, CTNNB1 and GSK3B) from the cytoplasm to the cell membrane. Has actin-regulated ATPase activity and is essential for controlling focal adhesions (FAs) assembly and dynamics. Interaction with CAMSAP3 at the minus ends of non-centrosomal microtubules tethers microtubules minus-ends to actin filaments, regulating focal adhesion size and cell migration. May play role in delivery of transport vesicles containing GPI-linked proteins from the trans-Golgi network through its interaction with GOLGA4. Plays a key role in wound healing and epidermal cell migration. Required for efficient upward migration of bulge cells in response to wounding and this function is primarily rooted in its ability to coordinate microtubule dynamics and polarize hair follicle stem cells. As a regulator of actin and microtubule arrangement and stabilization, it plays an essential role in neurite outgrowth, branching and spine formation during brain development. The chain is Microtubule-actin cross-linking factor 1 from Rattus norvegicus (Rat).